A 189-amino-acid chain; its full sequence is Protein GrpE (189 aa).

Residues 1 to 38 (MTKSNETERMEESEETHSSDIRSASESDHASGSDHTES) show a composition bias toward basic and acidic residues. Residues 1–54 (MTKSNETERMEESEETHSSDIRSASESDHASGSDHTESADEIPTADAEQGELEQ) form a disordered region.

This sequence belongs to the GrpE family. As to quaternary structure, homodimer.

The protein localises to the cytoplasm. Its function is as follows. Participates actively in the response to hyperosmotic and heat shock by preventing the aggregation of stress-denatured proteins, in association with DnaK and GrpE. It is the nucleotide exchange factor for DnaK and may function as a thermosensor. Unfolded proteins bind initially to DnaJ; upon interaction with the DnaJ-bound protein, DnaK hydrolyzes its bound ATP, resulting in the formation of a stable complex. GrpE releases ADP from DnaK; ATP binding to DnaK triggers the release of the substrate protein, thus completing the reaction cycle. Several rounds of ATP-dependent interactions between DnaJ, DnaK and GrpE are required for fully efficient folding. The chain is Protein GrpE from Tropheryma whipplei (strain Twist) (Whipple's bacillus).